The chain runs to 310 residues: Endo-1,4-beta-xylanase B (310 aa).

The N-terminal stretch at 1-19 is a signal peptide; that stretch reads MISLSSVAIALTTVVGALA. Residues 33–223 enclose the GH11 domain; the sequence is AITSSQTGTN…SSGSASMTVS (191 aa). Catalysis depends on Glu-119, which acts as the Nucleophile. Residue Glu-210 is the Proton donor of the active site. Residues 218–227 show a composition bias toward low complexity; the sequence is ASMTVSAGSS. The segment at 218–274 is disordered; the sequence is ASMTVSAGSSSSGGSGSGSGSGSGSGSGSGSQTTTAGSSTGTGTGSGSGSGSGGSGG. Over residues 228–246 the composition is skewed to gly residues; the sequence is SSGGSGSGSGSGSGSGSGS. The span at 247–256 shows a compositional bias: low complexity; that stretch reads GSQTTTAGSS. Over residues 257-274 the composition is skewed to gly residues; the sequence is TGTGTGSGSGSGSGGSGG. A CBM1 domain is found at 275 to 310; sequence NCAAQWGQCGGQGWNGPTCCSSGTCKASNQWYSQCL.

The protein belongs to the glycosyl hydrolase 11 (cellulase G) family.

The protein resides in the secreted. It carries out the reaction Endohydrolysis of (1-&gt;4)-beta-D-xylosidic linkages in xylans.. It functions in the pathway glycan degradation; xylan degradation. Functionally, endo-1,4-beta-xylanase involved in the hydrolysis of xylan, a major structural heterogeneous polysaccharide found in plant biomass representing the second most abundant polysaccharide in the biosphere, after cellulose. Hydrolyzes birchwood xylan, beechwood xylan, and oat spelt xylan to produce short-chain xylooligosaccharides, xylopentaose, xylotriose, and xylobiose as the main products. The protein is Endo-1,4-beta-xylanase B (xynB) of Penicillium oxalicum.